The following is a 427-amino-acid chain: Acetylornithine aminotransferase (427 aa).

The interval 1–23 (MSLQTLIEQATNPPESGSAASSP) is disordered. Pyridoxal 5'-phosphate-binding positions include 124 to 125 (GA) and F157. R160 contributes to the N(2)-acetyl-L-ornithine binding site. Pyridoxal 5'-phosphate is bound at residue 248–251 (DEVQ). K277 is modified (N6-(pyridoxal phosphate)lysine). S304 is a N(2)-acetyl-L-ornithine binding site. T305 contacts pyridoxal 5'-phosphate.

The protein belongs to the class-III pyridoxal-phosphate-dependent aminotransferase family. ArgD subfamily. Homodimer. Pyridoxal 5'-phosphate is required as a cofactor.

The protein localises to the cytoplasm. It catalyses the reaction N(2)-acetyl-L-ornithine + 2-oxoglutarate = N-acetyl-L-glutamate 5-semialdehyde + L-glutamate. The protein operates within amino-acid biosynthesis; L-arginine biosynthesis; N(2)-acetyl-L-ornithine from L-glutamate: step 4/4. The sequence is that of Acetylornithine aminotransferase from Nostoc sp. (strain PCC 7120 / SAG 25.82 / UTEX 2576).